The sequence spans 609 residues: Alpha-glucosides permease MPH2 (609 aa).

The Cytoplasmic portion of the chain corresponds to 1–106 (MKNLSFLINR…AAAWSLLVST (106 aa)). Residues 107–127 (TLIMEGYDTAILGAFYALPIF) form a helical membrane-spanning segment. Residues 128 to 142 (QRKFGSQNDKTGEWE) are Extracellular-facing. The helical transmembrane segment at 143 to 163 (ISASWQIGLTLCYMAGEIVGL) threads the bilayer. Over 164-178 (QLTGPSVDLVGNRYT) the chain is Cytoplasmic. The helical transmembrane segment at 179 to 199 (LIIALFFLAAFTFILYFCNSL) threads the bilayer. Residue glycine 200 is a topological domain, extracellular. Residues 201 to 221 (MIAVGQALCGMPWGCFQCLTV) traverse the membrane as a helical segment. Topologically, residues 222–234 (SYASEICPLALRY) are cytoplasmic. A helical transmembrane segment spans residues 235-255 (YLTTYSNLCWLFGQLFAAGIM). Topologically, residues 256-270 (KNSQKKYADSELGYK) are extracellular. Residues 271 to 291 (LPFALQWILPVPLALGIFFAP) form a helical membrane-spanning segment. Over 292–363 (ESPWWLVKKG…EDKINRRRTR (72 aa)) the chain is Cytoplasmic. The helical transmembrane segment at 364–384 (ITCLCWAGQATCGSILIGYST) threads the bilayer. At 385–397 (YFYEKAGVSTEMS) the chain is on the extracellular side. The chain crosses the membrane as a helical span at residues 398–418 (FTFSIIQYCLGICATFLSWWA). Topologically, residues 419 to 426 (SKYFGRYD) are cytoplasmic. Residues 427–447 (LYAFGLAFQTIVFFIIGGLGC) form a helical membrane-spanning segment. The Extracellular portion of the chain corresponds to 448–459 (SSTHGSKMGSGS). A helical transmembrane segment spans residues 460 to 480 (LLMAVAFFYNLGIAPVVFCLV). The Cytoplasmic segment spans residues 481-492 (SEMPSSRLRTKT). Residues 493 to 513 (IILARNTYNVVSIICSVLILY) traverse the membrane as a helical segment. Residues 514–525 (QLNSKKWNWGAK) lie on the Extracellular side of the membrane. The chain crosses the membrane as a helical span at residues 526–546 (SGFFWGVLCFCTLIWAVVDLP). The Cytoplasmic portion of the chain corresponds to 547 to 609 (ETAGKTFVEI…QRNSNVSHHL (63 aa)).

Belongs to the major facilitator superfamily. Sugar transporter (TC 2.A.1.1) family.

The protein resides in the cell membrane. High-affinity uptake of maltose and maltotriose. Also transports alpha-methylglucoside, glucose and turanose but not melezitose or trehalose. The sequence is that of Alpha-glucosides permease MPH2 (MPH2) from Saccharomyces cerevisiae (strain ATCC 204508 / S288c) (Baker's yeast).